Here is a 105-residue protein sequence, read N- to C-terminus: Small ribosomal subunit protein uS10c (105 aa).

The protein belongs to the universal ribosomal protein uS10 family. Part of the 30S ribosomal subunit.

It is found in the plastid. The protein localises to the chloroplast. Its function is as follows. Involved in the binding of tRNA to the ribosomes. The chain is Small ribosomal subunit protein uS10c from Pyropia yezoensis (Susabi-nori).